A 41-amino-acid chain; its full sequence is MKNFTTYLSTAPVVATGWFIVTAALLIEINRFFPDPLVFSF.

Residues 7-27 (YLSTAPVVATGWFIVTAALLI) form a helical membrane-spanning segment.

Belongs to the PsaJ family.

It is found in the plastid. The protein localises to the chloroplast thylakoid membrane. In terms of biological role, may help in the organization of the PsaE and PsaF subunits. This Tetradesmus obliquus (Green alga) protein is Photosystem I reaction center subunit IX.